A 464-amino-acid polypeptide reads, in one-letter code: Light-independent protochlorophyllide reductase subunit N (464 aa).

3 residues coordinate [4Fe-4S] cluster: Cys29, Cys54, and Cys114.

It belongs to the BchN/ChlN family. Protochlorophyllide reductase is composed of three subunits; ChlL, ChlN and ChlB. Forms a heterotetramer of two ChlB and two ChlN subunits. It depends on [4Fe-4S] cluster as a cofactor.

It localises to the plastid. The protein resides in the chloroplast. It carries out the reaction chlorophyllide a + oxidized 2[4Fe-4S]-[ferredoxin] + 2 ADP + 2 phosphate = protochlorophyllide a + reduced 2[4Fe-4S]-[ferredoxin] + 2 ATP + 2 H2O. The protein operates within porphyrin-containing compound metabolism; chlorophyll biosynthesis (light-independent). Its function is as follows. Component of the dark-operative protochlorophyllide reductase (DPOR) that uses Mg-ATP and reduced ferredoxin to reduce ring D of protochlorophyllide (Pchlide) to form chlorophyllide a (Chlide). This reaction is light-independent. The NB-protein (ChlN-ChlB) is the catalytic component of the complex. The protein is Light-independent protochlorophyllide reductase subunit N of Stigeoclonium helveticum (Green alga).